Consider the following 62-residue polypeptide: Temporin-La (62 aa).

The first 22 residues, 1–22 (MFPLKKSLLLLFFLGTINLSFC), serve as a signal peptide directing secretion. A propeptide spanning residues 23–47 (EEERDVDQDERRDDPGERNVQVEKR) is cleaved from the precursor. Position 60 is a leucine amide (Leu60).

This sequence belongs to the frog skin active peptide (FSAP) family. Temporin subfamily. Expressed by the skin glands.

The protein resides in the secreted. Its subcellular location is the target cell membrane. Its function is as follows. Antimicrobial peptide with amphipathic alpha-helical structure that acts against both Gram-positive and Gram-negative bacteria and the fungus Candida albicans. Is active against S.aureus ATCC 25923 (MIC=2.5 ug/ml), S.suis 2 CVCC 606 (MIC=15.6 ug/ml), Salmonella ATCC 20020 (MIC=15.6 ug/ml), P.aeruginosa ATCC 227853 (MIC=60 ug/ml), and C.albicans ATCC10231 (MIC=31.25 ug/ml). Is not active against B.subtilis ADB403, E.coli ATCC 25922, and K.pneumoniae ATCC 700603. Also shows a strong antitumor activity, but no hemolytic activity. The protein is Temporin-La of Aquarana catesbeiana (American bullfrog).